The primary structure comprises 213 residues: Heat shock protein 27 (213 aa).

Residues Ser58 and Ser75 each carry the phosphoserine modification. A sHSP domain is found at 71–182 (SRRASGGPNA…SERIVQIQQT (112 aa)). A disordered region spans residues 157–213 (VLTLKAPPPPSKEQAKSERIVQIQQTGPAHLSVKAPAPEAGDGKAENGSGEKMETSK). A compositionally biased stretch (basic and acidic residues) spans 197–213 (GDGKAENGSGEKMETSK).

The protein belongs to the small heat shock protein (HSP20) family.

This is Heat shock protein 27 (Hsp27) from Drosophila melanogaster (Fruit fly).